We begin with the raw amino-acid sequence, 508 residues long: MTEPTQPQAAVAADENQIVAERRDKLRALRDQGIAYPNDFQPTHHAAGLQTEYADADKEALDAKALDVAVAGRMMLKRVMGKASFATVQDGSGQIQFFVTPADVGAETYDAFKKWDLGDIVAARGVLFRTNKGELSVKCTELRLLAKALRPLPDKFHGLADQETRYRQRYVDLIVTPETRATFRARTKAIASIRKFMSDADFMEVETPMLHPIPGGAAAKPFVTHHNALDMQMFLRIAPELYLKRLIVGGFERVFEINRNFRNEGVSPRHNPEFTMMEFYAAYTDYRWLMDFTERLIRQAAVDALGTATIRYQGRELDLAKPFHRLTITQAIQKYAPNYTDGQLSDDAFLRGELKRLGVDVTQPAFLNAGIGALQLALFEETAEAQLWEPTFIVDYPIEVSPLARESDTVAGITERFELFVTGREIANGFSELNDPEDQAARFRKQVEQKDAGDEEAMFFDADYIRALEYGMPPTGGCGIGIDRLVMLLTDSPTIRDVLLFPHLRRED.

The Mg(2+) site is built by Glu418 and Glu425.

Belongs to the class-II aminoacyl-tRNA synthetase family. In terms of assembly, homodimer. Mg(2+) is required as a cofactor.

It is found in the cytoplasm. It carries out the reaction tRNA(Lys) + L-lysine + ATP = L-lysyl-tRNA(Lys) + AMP + diphosphate. The chain is Lysine--tRNA ligase from Burkholderia pseudomallei (strain 668).